A 317-amino-acid chain; its full sequence is MPIHGAPRKLLGSLNSTPTATPKLGLAANHTGAPCLEVSIPDGLFLSLGLVSLVENVLVVAAIAKNRNLHSPMYCFICCLALSDLLVSGSNMLEMAVVLLLEGGALATRASVVQQLHNTIDVLTCSSMLCSLCFLGAIAVDRHISIFYALRYHSIMTLPRAQRVIAAIWVASILSSTLFITYYDHAAVLLCLVVFFLAMLVLMAVLYVHMLARACQHAQGITRLHKRQPPAHQGFGLRGAATLTILLGIFFLCWGPFFLHLKLVVFCPQHLTCSCIFKNFKVFLTLIICNTIIDPLIYAFRSQELRRTLKEVLLCSW.

The Extracellular segment spans residues 1–37; that stretch reads MPIHGAPRKLLGSLNSTPTATPKLGLAANHTGAPCLE. Asn-29 is a glycosylation site (N-linked (GlcNAc...) asparagine). Residues 38–63 form a helical membrane-spanning segment; that stretch reads VSIPDGLFLSLGLVSLVENVLVVAAI. Topologically, residues 64-72 are cytoplasmic; sequence AKNRNLHSP. Residues 73-93 traverse the membrane as a helical segment; sequence MYCFICCLALSDLLVSGSNML. The Extracellular portion of the chain corresponds to 94-118; that stretch reads EMAVVLLLEGGALATRASVVQQLHN. Residues 119–140 form a helical membrane-spanning segment; sequence TIDVLTCSSMLCSLCFLGAIAV. At 141–163 the chain is on the cytoplasmic side; the sequence is DRHISIFYALRYHSIMTLPRAQR. The helical transmembrane segment at 164 to 183 threads the bilayer; the sequence is VIAAIWVASILSSTLFITYY. Topologically, residues 184-191 are extracellular; that stretch reads DHAAVLLC. Residues 192–211 form a helical membrane-spanning segment; that stretch reads LVVFFLAMLVLMAVLYVHML. At 212–240 the chain is on the cytoplasmic side; that stretch reads ARACQHAQGITRLHKRQPPAHQGFGLRGA. The helical transmembrane segment at 241–266 threads the bilayer; sequence ATLTILLGIFFLCWGPFFLHLKLVVF. Over 267–279 the chain is Extracellular; the sequence is CPQHLTCSCIFKN. The chain crosses the membrane as a helical span at residues 280-300; sequence FKVFLTLIICNTIIDPLIYAF. Residues 301–317 are Cytoplasmic-facing; it reads RSQELRRTLKEVLLCSW. Cys-315 carries the S-palmitoyl cysteine lipid modification.

It belongs to the G-protein coupled receptor 1 family. In terms of assembly, interacts with MGRN1, but does not undergo MGRN1-mediated ubiquitination; this interaction competes with GNAS-binding and thus inhibits agonist-induced cAMP production. Interacts with OPN3; the interaction results in a decrease in MC1R-mediated cAMP signaling and ultimately a decrease in melanin production in melanocytes.

It localises to the cell membrane. In terms of biological role, receptor for MSH (alpha, beta and gamma) and ACTH. The activity of this receptor is mediated by G proteins which activate adenylate cyclase. Mediates melanogenesis, the production of eumelanin (black/brown) and phaeomelanin (red/yellow), via regulation of cAMP signaling in melanocytes. The chain is Melanocyte-stimulating hormone receptor (MC1R) from Saimiri oerstedii (Central American squirrel monkey).